Here is an 87-residue protein sequence, read N- to C-terminus: NADH-ubiquinone oxidoreductase chain 4L (87 aa).

Transmembrane regions (helical) follow at residues 1-21 (MNLSIFLFLIGILGFILNRKN), 22-42 (IILMIIAIEIMLLAVTLLVLI), and 57-77 (LYIISIAGAESVIGLSILVAF).

This sequence belongs to the complex I subunit 4L family. Core subunit of respiratory chain NADH dehydrogenase (Complex I) which is composed of 45 different subunits.

Its subcellular location is the mitochondrion inner membrane. The catalysed reaction is a ubiquinone + NADH + 5 H(+)(in) = a ubiquinol + NAD(+) + 4 H(+)(out). In terms of biological role, core subunit of the mitochondrial membrane respiratory chain NADH dehydrogenase (Complex I) which catalyzes electron transfer from NADH through the respiratory chain, using ubiquinone as an electron acceptor. The polypeptide is NADH-ubiquinone oxidoreductase chain 4L (ND4L) (Moniliophthora perniciosa (strain FA553 / isolate CP02) (Witches'-broom disease fungus)).